Reading from the N-terminus, the 450-residue chain is Phosphoglucosamine mutase (450 aa).

Catalysis depends on serine 101, which acts as the Phosphoserine intermediate. Residues serine 101, aspartate 241, aspartate 243, and aspartate 245 each coordinate Mg(2+). At serine 101 the chain carries Phosphoserine.

It belongs to the phosphohexose mutase family. Mg(2+) serves as cofactor. Activated by phosphorylation.

It catalyses the reaction alpha-D-glucosamine 1-phosphate = D-glucosamine 6-phosphate. In terms of biological role, catalyzes the conversion of glucosamine-6-phosphate to glucosamine-1-phosphate. The protein is Phosphoglucosamine mutase of Listeria monocytogenes serovar 1/2a (strain ATCC BAA-679 / EGD-e).